Here is a 361-residue protein sequence, read N- to C-terminus: Phospho-N-acetylmuramoyl-pentapeptide-transferase (361 aa).

10 consecutive transmembrane segments (helical) span residues 27 to 47 (ILASLTALIVGLLCGPLMIRW), 70 to 90 (GTPTMGGVLILLAITVSCLLW), 97 to 117 (SLWLVLLVTLANGLVGWVDDY), 134 to 154 (YFWQSVIALVAVSYLYWNASL), 167 to 187 (TVTWDLGIFFPVLAYFVIVGS), 199 to 219 (GLAIMPIVMVAGALGVFAYAS), 236 to 256 (TGELTIFCSSIVGAGLGFLWY), 263 to 283 (VFMGDVGSLALGAALGIVAVV), 288 to 308 (LVLLIMGGLFVIETLSVILQV), and 338 to 358 (KVIVRFWIITVVFVLCGLATL).

This sequence belongs to the glycosyltransferase 4 family. MraY subfamily. The cofactor is Mg(2+).

The protein resides in the cell inner membrane. It carries out the reaction UDP-N-acetyl-alpha-D-muramoyl-L-alanyl-gamma-D-glutamyl-meso-2,6-diaminopimeloyl-D-alanyl-D-alanine + di-trans,octa-cis-undecaprenyl phosphate = di-trans,octa-cis-undecaprenyl diphospho-N-acetyl-alpha-D-muramoyl-L-alanyl-D-glutamyl-meso-2,6-diaminopimeloyl-D-alanyl-D-alanine + UMP. The protein operates within cell wall biogenesis; peptidoglycan biosynthesis. Its function is as follows. Catalyzes the initial step of the lipid cycle reactions in the biosynthesis of the cell wall peptidoglycan: transfers peptidoglycan precursor phospho-MurNAc-pentapeptide from UDP-MurNAc-pentapeptide onto the lipid carrier undecaprenyl phosphate, yielding undecaprenyl-pyrophosphoryl-MurNAc-pentapeptide, known as lipid I. In Legionella pneumophila (strain Lens), this protein is Phospho-N-acetylmuramoyl-pentapeptide-transferase.